Consider the following 70-residue polypeptide: Conotoxin Cl6.13 (70 aa).

The first 21 residues, 1–21 (MKFPLLFISLALAAFLTRVQD), serve as a signal peptide directing secretion. Positions 22–33 (ADSSVISKEKSV) are excised as a propeptide. 3 cysteine pairs are disulfide-bonded: Cys-41-Cys-58, Cys-48-Cys-63, and Cys-57-Cys-68.

Expressed by the venom duct.

It localises to the secreted. The protein is Conotoxin Cl6.13 of Californiconus californicus (California cone).